A 66-amino-acid polypeptide reads, in one-letter code: Large ribosomal subunit protein uL29 (66 aa).

This sequence belongs to the universal ribosomal protein uL29 family.

The protein is Large ribosomal subunit protein uL29 of Helicobacter pylori (strain P12).